The following is a 244-amino-acid chain: Heat stress transcription factor B-3 (244 aa).

Residues 38–132 (PPPFLVKTYK…LMSNIRRRKS (95 aa)) mediate DNA binding. Positions 173 to 218 (TSSSFVYTALLDENKCLKNENELLSCELGKTKKKCKQLMELVERYR) are hydrophobic repeat HR-A/B. The Nuclear localization signal signature appears at 202–208 (KTKKKCK). A disordered region spans residues 216-244 (RYRGEDEDATDESDDEEDEGLKLFGVKLE). Over residues 220 to 234 (EDEDATDESDDEEDE) the composition is skewed to acidic residues. The Nuclear export signal signature appears at 236–243 (LKLFGVKL).

Belongs to the HSF family. Class B subfamily. Homotrimer. Post-translationally, exhibits temperature-dependent phosphorylation.

The protein localises to the cytoplasm. It is found in the nucleus. Its function is as follows. Transcriptional regulator that specifically binds DNA sequence 5'-AGAAnnTTCT-3' known as heat shock promoter elements (HSE). In Arabidopsis thaliana (Mouse-ear cress), this protein is Heat stress transcription factor B-3 (HSFB3).